The primary structure comprises 273 residues: 2,3,4,5-tetrahydropyridine-2,6-dicarboxylate N-succinyltransferase (273 aa).

Residues arginine 105 and aspartate 142 each coordinate substrate.

It belongs to the transferase hexapeptide repeat family. As to quaternary structure, homotrimer.

It is found in the cytoplasm. The catalysed reaction is (S)-2,3,4,5-tetrahydrodipicolinate + succinyl-CoA + H2O = (S)-2-succinylamino-6-oxoheptanedioate + CoA. Its pathway is amino-acid biosynthesis; L-lysine biosynthesis via DAP pathway; LL-2,6-diaminopimelate from (S)-tetrahydrodipicolinate (succinylase route): step 1/3. The protein is 2,3,4,5-tetrahydropyridine-2,6-dicarboxylate N-succinyltransferase of Bordetella parapertussis (strain 12822 / ATCC BAA-587 / NCTC 13253).